Here is a 246-residue protein sequence, read N- to C-terminus: UL16-binding protein 6 (246 aa).

Positions 1 to 25 (MAAAAIPALLLCLPLLFLLFGWSRA) are cleaved as a signal peptide. An MHC class I alpha-1 like region spans residues 29–117 (DPHSLCYDIT…IQLENYTPKE (89 aa)). C50 and C66 form a disulfide bridge. 2 N-linked (GlcNAc...) asparagine glycosylation sites follow: N68 and N82. The MHC class I alpha-2 like stretch occupies residues 118–210 (PLTLQARMSC…MDSTLEPSAG (93 aa)). C127 and C190 form a disulfide bridge. G218 carries GPI-anchor amidated glycine lipidation. Residues 219–246 (TTQLRATATTLILCCLLIILPCFILPGI) constitute a propeptide, removed in mature form.

This sequence belongs to the MHC class I family. As to quaternary structure, interacts with KLRK1/NKG2D. In terms of assembly, (Microbial infection) In CMV-infected cells, interacts with the viral glycoprotein UL16; this interaction causes relocalization from the cell surface to the cytoplasm and prevents binding to and activation of KLRK1/NKG2D, providing CMV with an immune evasion mechanism. As to expression, widely expressed. Expressed in trachea. Constitutively expressed in peripheral blood mononuclear cells, including B-cells and natural killer cells, as well as CD4+ and CD8+ T-cells and monocytes. Tends to be up-regulated in various lymphoid malignancies, including chronic lymphocytic leukemia.

It is found in the cell membrane. Its subcellular location is the endoplasmic reticulum. Its function is as follows. Binds and activates the KLRK1/NKG2D receptor, mediating natural killer cell cytotoxicity. This Homo sapiens (Human) protein is UL16-binding protein 6 (RAET1L).